Reading from the N-terminus, the 1223-residue chain is RNA-binding protein 20 (1223 aa).

3 disordered regions span residues 1 to 59 (MVLA…QAGL), 238 to 288 (QAYG…PTSQ), and 306 to 381 (GEVG…GARR). The span at 29–57 (APAPPAPPGPRGMQPPPPPPPPPPPPPQA) shows a compositional bias: pro residues. Polar residues-rich tracts occupy residues 238–261 (QAYG…SGSV) and 314–331 (GPNS…QSKP). The segment at 410–444 (HLPHICSICDKKVFDLKDWELHVKGKLHAQKCLLF) adopts a U1-type zinc-finger fold. Positions 520–595 (RVVHICNLPE…EKLLIRMSKR (76 aa)) constitute an RRM domain. The segment covering 626–636 (EADRYGPERPR) has biased composition (basic and acidic residues). 3 disordered regions span residues 626–902 (EADR…TNME), 971–995 (EISL…DVEM), and 1042–1102 (MSSP…STQE). Positions 630–657 (YGPERPRSRSPVSRSLSPRSHTPSFTSC) are RS. Residues Ser637, Ser639, Ser642, Ser644, Ser662, and Ser681 each carry the phosphoserine modification. Positions 638–662 (RSPVSRSLSPRSHTPSFTSCSSSHS) are enriched in low complexity. 2 stretches are compositionally biased toward basic and acidic residues: residues 676–711 (DSWE…MWAH) and 718–737 (RQVD…GYRE). Low complexity predominate over residues 742–752 (SGSPSSLHSVS). Ser744 carries the post-translational modification Phosphoserine. Basic and acidic residues-rich tracts occupy residues 755–774 (KSRE…DKYL) and 786–852 (RKDE…KEEQ). Ser803, Ser861, Ser872, Ser887, Ser889, Ser973, Ser976, and Ser1044 each carry phosphoserine. Residues 864-884 (RQEKETESSDAENTRTRKEQD) show a composition bias toward basic and acidic residues. Residues 1083 to 1102 (STPTETDLQSQACQGVSTQE) show a composition bias toward polar residues. 2 positions are modified to phosphoserine: Ser1111 and Ser1116. The segment at 1157–1188 (FYCKLCGLFYTSEEMAKMSHCRSAVHYRNLQK) adopts a Matrin-type zinc-finger fold. The tract at residues 1197–1223 (GLKETEGAGSPRPEDSGIVPHFERKKL) is disordered. Residue Ser1206 is modified to Phosphoserine.

In terms of assembly, associates with components of the U1 and U2 U1 small nuclear ribonucleoprotein complexes. Phosphorylation regulates the subcellular localization. Phosphorylation of Ser-637 and Ser-639 in the RS (arginine/serine-rich) region promotes nuclear localization of the protein. In contrast, phosphorylation of the C-terminal disordered region promotes localization to cytoplasmic ribonucleoprotein granules.

The protein resides in the nucleus. It localises to the cytoplasm. Its subcellular location is the cytoplasmic ribonucleoprotein granule. In terms of biological role, RNA-binding protein that acts as a regulator of mRNA splicing of a subset of genes encoding key structural proteins involved in cardiac development, such as TTN (Titin), CACNA1C, CAMK2D or PDLIM5/ENH. Acts as a repressor of mRNA splicing: specifically binds the 5'UCUU-3' motif that is predominantly found within intronic sequences of pre-mRNAs, leading to the exclusion of specific exons in target transcripts. RBM20-mediated exon skipping is hormone-dependent and is essential for TTN isoform transition in both cardiac and skeletal muscles. RBM20-mediated exon skipping of TTN provides substrates for the formation of circular RNA (circRNAs) from the TTN transcripts. Together with RBM24, promotes the expression of short isoforms of PDLIM5/ENH in cardiomyocytes. This is RNA-binding protein 20 from Sus scrofa (Pig).